Reading from the N-terminus, the 232-residue chain is Ubiquinone biosynthesis O-methyltransferase (232 aa).

Arginine 36, glycine 55, aspartate 76, and leucine 120 together coordinate S-adenosyl-L-methionine.

Belongs to the methyltransferase superfamily. UbiG/COQ3 family.

It carries out the reaction a 3-demethylubiquinol + S-adenosyl-L-methionine = a ubiquinol + S-adenosyl-L-homocysteine + H(+). It catalyses the reaction a 3-(all-trans-polyprenyl)benzene-1,2-diol + S-adenosyl-L-methionine = a 2-methoxy-6-(all-trans-polyprenyl)phenol + S-adenosyl-L-homocysteine + H(+). Its pathway is cofactor biosynthesis; ubiquinone biosynthesis. Its function is as follows. O-methyltransferase that catalyzes the 2 O-methylation steps in the ubiquinone biosynthetic pathway. The chain is Ubiquinone biosynthesis O-methyltransferase from Pseudomonas fluorescens (strain ATCC BAA-477 / NRRL B-23932 / Pf-5).